Reading from the N-terminus, the 498-residue chain is Minor fimbrium subunit Mfa1 (498 aa).

Residues Met1–Ser19 form the signal peptide. A lipid anchor (N-palmitoyl cysteine) is attached at Cys20. Cys20 carries S-diacylglycerol cysteine lipidation. Residues Cys20 to Arg50 constitute a propeptide that is removed on maturation. Positions Ser436–Gln476 are disordered.

Belongs to the bacteroidetes fimbrillin superfamily. FimA/Mfa1 family. In terms of assembly, structural component of the fimbrial stalk. Minor fimbriae are composed of a structural subunit, such as the 53 kDa fimbrillin, and the accessory subunits Mfa3, Mfa4 and Mfa5. Fimbrium assembly occurs by linear, head-to-tail oligomerization of fimbrial subunits. This is mediated via insertion of a C-terminal beta-strand from one subunit into a groove in the N-terminal domain of the following subunit.

Its subcellular location is the fimbrium. The protein localises to the cell outer membrane. Functionally, structural subunit of the minor fimbriae. These filamentous pili are attached to the cell surface; they mediate biofilm formation, adhesion onto host cells and onto other bacteria that are part of the oral microbiome. They play an important role in invasion of periodontal tissues and are recognized as major virulence factors. Mfa1 orthologs from different strains have highly divergent sequences, and this correlates with pathogenicity. The polypeptide is Minor fimbrium subunit Mfa1 (Porphyromonas gingivalis (Bacteroides gingivalis)).